Consider the following 290-residue polypeptide: Pyridoxal kinase PdxY (290 aa).

Substrate is bound by residues Ser-9 and 44–45 (TQ). 4 residues coordinate ATP: Asp-112, Val-144, Glu-149, and Lys-182. Asp-221 lines the substrate pocket.

It belongs to the pyridoxine kinase family. PdxY subfamily. Homodimer. Mg(2+) serves as cofactor.

The catalysed reaction is pyridoxal + ATP = pyridoxal 5'-phosphate + ADP + H(+). It functions in the pathway cofactor metabolism; pyridoxal 5'-phosphate salvage; pyridoxal 5'-phosphate from pyridoxal: step 1/1. Functionally, pyridoxal kinase involved in the salvage pathway of pyridoxal 5'-phosphate (PLP). Catalyzes the phosphorylation of pyridoxal to PLP. In Vibrio vulnificus (strain CMCP6), this protein is Pyridoxal kinase PdxY.